The chain runs to 514 residues: MKNTLKLIFFVLLLFALFVSLRMFIDVAFYSDVIGIKDVSILGIISILFTVSAFLIGCVIFLENRHPSKTLTWLIVLGIFPVFGFFAYLLFGQNFRRKRMFQKKALLDEQAFLQYKGHEDYEERILRNHKHQELLFRLADRLGALNISFQTETRTLTNGDETFQAILDGLKRAKHHIHMEYYIVRDDKLGTEIKDILIQKSKEGVVVRFLYDAVGSFKLSKSYIEELNDAGVEMIPFFPVRFPILNDKINYRNHRKIVIIDGNEGFVGGLNIGDEYLGKDKYFGFWRDTHLYLRGEAVQSLQLIFLQDWFYMTGEAVLAPEYLQAKAVEGEHWGGVQLVAGGPDNKWETIKHLYFAMIASARKSIWIATPYFIPDDDILSALKVAALAGIDVRLLMPSKPDKRTVFYASRSYFPELLDAGVKIYEYEKGFLHSKVVIVDSDLASIGTANMDMRSFHLNFEVNAFLYDTDSIRKLVQDFKDDLEESSEIHVDRFHKRRLHRRIVESTYRLLSPLL.

The next 3 helical transmembrane spans lie at 7 to 27, 41 to 61, and 71 to 91; these read LIFF…FIDV, ILGI…CVIF, and LTWL…YLLF. PLD phosphodiesterase domains follow at residues 249-276 and 427-454; these read INYR…GDEY and EKGF…DMRS. Active-site residues include H254, K256, D261, H432, K434, and D439.

Belongs to the phospholipase D family. Cardiolipin synthase subfamily.

It is found in the cell membrane. It catalyses the reaction 2 a 1,2-diacyl-sn-glycero-3-phospho-(1'-sn-glycerol) = a cardiolipin + glycerol. In terms of biological role, catalyzes the reversible phosphatidyl group transfer from one phosphatidylglycerol molecule to another to form cardiolipin (CL) (diphosphatidylglycerol) and glycerol. The protein is Cardiolipin synthase 2 (cls2) of Bacillus anthracis.